A 380-amino-acid polypeptide reads, in one-letter code: 1-deoxy-D-xylulose 5-phosphate reductoisomerase (380 aa).

NADPH is bound by residues threonine 10, glycine 11, serine 12, isoleucine 13, glycine 36, arginine 37, asparagine 38, and asparagine 120. Residue lysine 121 participates in 1-deoxy-D-xylulose 5-phosphate binding. NADPH is bound at residue glutamate 122. Aspartate 146 serves as a coordination point for Mn(2+). Residues serine 147, glutamate 148, serine 172, and histidine 195 each coordinate 1-deoxy-D-xylulose 5-phosphate. Position 148 (glutamate 148) interacts with Mn(2+). Glycine 201 provides a ligand contact to NADPH. 1-deoxy-D-xylulose 5-phosphate-binding residues include serine 208, asparagine 213, lysine 214, and glutamate 217. Glutamate 217 is a Mn(2+) binding site.

This sequence belongs to the DXR family. Mg(2+) serves as cofactor. Requires Mn(2+) as cofactor.

It catalyses the reaction 2-C-methyl-D-erythritol 4-phosphate + NADP(+) = 1-deoxy-D-xylulose 5-phosphate + NADPH + H(+). It functions in the pathway isoprenoid biosynthesis; isopentenyl diphosphate biosynthesis via DXP pathway; isopentenyl diphosphate from 1-deoxy-D-xylulose 5-phosphate: step 1/6. Functionally, catalyzes the NADPH-dependent rearrangement and reduction of 1-deoxy-D-xylulose-5-phosphate (DXP) to 2-C-methyl-D-erythritol 4-phosphate (MEP). This chain is 1-deoxy-D-xylulose 5-phosphate reductoisomerase, found in Listeria innocua serovar 6a (strain ATCC BAA-680 / CLIP 11262).